Consider the following 117-residue polypeptide: Peptidyl-tRNA hydrolase (117 aa).

The protein belongs to the PTH2 family.

It is found in the cytoplasm. It catalyses the reaction an N-acyl-L-alpha-aminoacyl-tRNA + H2O = an N-acyl-L-amino acid + a tRNA + H(+). Functionally, the natural substrate for this enzyme may be peptidyl-tRNAs which drop off the ribosome during protein synthesis. This chain is Peptidyl-tRNA hydrolase, found in Metallosphaera sedula (strain ATCC 51363 / DSM 5348 / JCM 9185 / NBRC 15509 / TH2).